Reading from the N-terminus, the 385-residue chain is MRILKSHPLLKIVNSYMIDSPQPANISYLWNFGSLLALCLGIQIVTGVTLAMHYTPSVLEAFNSVEHIMRDVNNGWLVRYLHANTASAFFFLVYLHIGRGLYYGSYKSPRTLTWAIGTVILIVMMATAFLGYVLPYGQMSLWGATVITNLMSAIPWIGQDIVEFIWGGFSVNNATLNRFFALHFLLPFVLAALALMHLIAMHDTVGSGNPLGISGNYDRLPFAPYFIFKDLVTIFIFFIVLSIFVFFMPNALGDSENYVMANPMQTPPAIVPEWYLLPFYAILRSIPNKLLGVIAMFSAILALMVMPITDLSKLRGVQFRPLSKVAFYIFVANFLVLMQIGAKHVETPFIELGQISTVLYFAHFFVIVPVVSLIENSLVELATKK.

4 consecutive transmembrane segments (helical) span residues 32–52 (FGSLLALCLGIQIVTGVTLAM), 76–98 (WLVRYLHANTASAFFFLVYLHIG), 113–133 (TWAIGTVILIVMMATAFLGYV), and 179–199 (FFALHFLLPFVLAALALMHLI). Heme b is bound by residues histidine 82 and histidine 96. The heme b site is built by histidine 183 and histidine 197. Histidine 202 serves as a coordination point for a ubiquinone. 4 helical membrane passes run 226–246 (FIFKDLVTIFIFFIVLSIFVF), 290–310 (LLGVIAMFSAILALMVMPITD), 322–342 (LSKVAFYIFVANFLVLMQIGA), and 349–369 (FIELGQISTVLYFAHFFVIVP).

Belongs to the cytochrome b family. Fungal cytochrome b-c1 complex contains 10 subunits; 3 respiratory subunits, 2 core proteins and 5 low-molecular weight proteins. Cytochrome b-c1 complex is a homodimer. It depends on heme b as a cofactor.

It localises to the mitochondrion inner membrane. Component of the ubiquinol-cytochrome c reductase complex (complex III or cytochrome b-c1 complex) that is part of the mitochondrial respiratory chain. The b-c1 complex mediates electron transfer from ubiquinol to cytochrome c. Contributes to the generation of a proton gradient across the mitochondrial membrane that is then used for ATP synthesis. In Aspergillus tubingensis, this protein is Cytochrome b (cob).